Consider the following 121-residue polypeptide: Neuromedin-B (121 aa).

A signal peptide spans Met-1–Val-24. The residue at position 56 (Met-56) is a Methionine amide. The propeptide occupies Ser-60–Lys-121.

The protein belongs to the bombesin/neuromedin-B/ranatensin family. As to expression, in the hindbrain, expressed in the medulla surrounding the lateral half of the facial nucleus. Also expressed in the olfactory bulb and hippocampus. Detected in a subset of neurons distributed throughout the retrotrapezoid nucleus/parafacial respiratory group (RTN/pFRG). Within the RTN/pFRG, expressed in neuronal subpopulations distinct from those expressing Grp. Expressed in lung.

The protein localises to the secreted. The protein resides in the cell projection. It localises to the neuron projection. Stimulates smooth muscle contraction. Induces sighing by acting directly on the pre-Botzinger complex, a cluster of several thousand neurons in the ventrolateral medulla responsible for inspiration during respiratory activity. Contributes to the induction of sneezing following exposure to chemical irritants or allergens which causes release of NMB by nasal sensory neurons and activation of NMBR-expressing neurons in the sneeze-evoking region of the brainstem. These in turn activate neurons of the caudal ventral respiratory group, giving rise to the sneeze reflex. Contributes to induction of acute itch, possibly through activation of the NMBR receptor on dorsal root ganglion neurons. Increases expression of NMBR and steroidogenic mediators STAR, CYP11A1 and HSD3B1 in Leydig cells, induces secretion of testosterone by Leydig cells and also promotes Leydig cell proliferation. Plays a role in the innate immune response to influenza A virus infection by enhancing interferon alpha expression and reducing expression of IL6. Plays a role in CSF1-induced proliferation of osteoclast precursors by contributing to the positive regulation of the expression of the CSF1 receptor CSF1R. The polypeptide is Neuromedin-B (Nmb) (Mus musculus (Mouse)).